The primary structure comprises 127 residues: Fluoride-specific ion channel FluC (127 aa).

A run of 3 helical transmembrane segments spans residues 28-48, 73-93, and 98-118; these read LALFGFPWMTCFINISGSLAM, TGVLGGYTTFSTFSLENALLI, and VGLAVLYSLVSVGLGLGGLFL. The Na(+) site is built by Gly-77 and Thr-80.

This sequence belongs to the fluoride channel Fluc/FEX (TC 1.A.43) family.

It is found in the cell inner membrane. It carries out the reaction fluoride(in) = fluoride(out). Its activity is regulated as follows. Na(+) is not transported, but it plays an essential structural role and its presence is essential for fluoride channel function. Functionally, fluoride-specific ion channel. Important for reducing fluoride concentration in the cell, thus reducing its toxicity. In Beijerinckia indica subsp. indica (strain ATCC 9039 / DSM 1715 / NCIMB 8712), this protein is Fluoride-specific ion channel FluC.